The primary structure comprises 198 residues: Probable GTP-binding protein EngB (198 aa).

The 174-residue stretch at Asp-22 to Thr-195 folds into the EngB-type G domain. GTP-binding positions include Gly-30–Ser-37, Gly-57–Thr-61, Asp-75–Gly-78, Thr-142–Asp-145, and Phe-174–Ser-176. Mg(2+) is bound by residues Ser-37 and Thr-59.

It belongs to the TRAFAC class TrmE-Era-EngA-EngB-Septin-like GTPase superfamily. EngB GTPase family. It depends on Mg(2+) as a cofactor.

Necessary for normal cell division and for the maintenance of normal septation. The protein is Probable GTP-binding protein EngB of Bacillus cytotoxicus (strain DSM 22905 / CIP 110041 / 391-98 / NVH 391-98).